Reading from the N-terminus, the 954-residue chain is Regulatory protein FlaEY (954 aa).

Functionally, functions in trans to modulate the level of transcription of the flagellin genes and several genes encoding chemotaxis functions. It is itself temporally controlled. The protein is Regulatory protein FlaEY (flaEY) of Caulobacter vibrioides (strain ATCC 19089 / CIP 103742 / CB 15) (Caulobacter crescentus).